The sequence spans 789 residues: Phenylalanine--tRNA ligase beta subunit (789 aa).

The tRNA-binding domain occupies 38–151; sequence KKHLQSFVVV…NTYNVGESFF (114 aa). The region spanning 398 to 474 is the B5 domain; sequence HNDILLNFSP…RLYGYDKILE (77 aa). Mg(2+)-binding residues include Asp-452, Asp-458, Glu-461, and Glu-462. The FDX-ACB domain maps to 694 to 787; sequence LRYQSVKRDF…ISKGFNGILR (94 aa).

Belongs to the phenylalanyl-tRNA synthetase beta subunit family. Type 1 subfamily. In terms of assembly, tetramer of two alpha and two beta subunits. Mg(2+) is required as a cofactor.

It is found in the cytoplasm. It carries out the reaction tRNA(Phe) + L-phenylalanine + ATP = L-phenylalanyl-tRNA(Phe) + AMP + diphosphate + H(+). In Ehrlichia ruminantium (strain Gardel), this protein is Phenylalanine--tRNA ligase beta subunit.